Here is a 104-residue protein sequence, read N- to C-terminus: Cytochrome c oxidase assembly factor 6 (104 aa).

A disordered region spans residues 1–22 (MGLFSFDGGKKESQPPNTRSQR). Residues 22-76 (RKLCWESRDAFFQCLDKADILDAMDPKNSKSIKSHCKVENEKFEENCAHSWIKYF) form the CHCH domain. Residues 25-35 (CWESRDAFFQC) carry the Cx9C motif motif. 2 cysteine pairs are disulfide-bonded: Cys25–Cys68 and Cys35–Cys57. The Cx10C motif motif lies at 57–68 (CKVENEKFEENC).

The protein belongs to the cytochrome c oxidase subunit 6B family. Interacts with COX2.

The protein resides in the cytoplasm. The protein localises to the nucleus. It localises to the mitochondrion intermembrane space. In terms of biological role, involved in the maturation of the mitochondrial respiratory chain complex IV subunit MT-CO2/COX2. Thereby, may regulate early steps of complex IV assembly. Mitochondrial respiratory chain complex IV or cytochrome c oxidase is the component of the respiratory chain that catalyzes the transfer of electrons from intermembrane space cytochrome c to molecular oxygen in the matrix and as a consequence contributes to the proton gradient involved in mitochondrial ATP synthesis. May also be required for efficient formation of respiratory supercomplexes comprised of complexes III and IV. This Saccharomyces cerevisiae (strain ATCC 204508 / S288c) (Baker's yeast) protein is Cytochrome c oxidase assembly factor 6.